Here is a 3122-residue protein sequence, read N- to C-terminus: DNA polymerase zeta catalytic subunit (3122 aa).

5 disordered regions span residues 270-289 (QRRR…SQDC), 425-457 (GYQG…NEPQ), 487-509 (LCRN…EMEW), 524-545 (LDGT…RAHS), and 842-886 (TSTK…TFEN). Over residues 277–286 (ESSQISQPES) the composition is skewed to polar residues. Positions 497–509 (EEDDSSSEEEMEW) are enriched in acidic residues. 2 stretches are compositionally biased toward polar residues: residues 533 to 545 (DNPL…RAHS) and 842 to 860 (TSTK…THND). Residue serine 1029 is modified to Phosphoserine. Disordered regions lie at residues 1034–1075 (YPIY…TLSF), 1154–1285 (VYNT…PTGI), 1429–1453 (VSVS…ESQT), 1538–1616 (KAQS…LSDD), 1842–1869 (NDVL…SFTP), 1959–1979 (NPRP…ESSN), and 2091–2138 (AAVP…RHSS). At threonine 1040 the chain carries Phosphothreonine. Composition is skewed to basic residues over residues 1042–1063 (KKSH…KQHR) and 1166–1179 (KASR…KSKA). The span at 1215 to 1239 (RANEKSLSRKHAIPADEKMKPHSEA) shows a compositional bias: basic and acidic residues. The span at 1243-1270 (PNHQSVSELTSSSGAQALSKQKEMSQTG) shows a compositional bias: polar residues. The span at 1429–1440 (VSVSEQSKTSET) shows a compositional bias: low complexity. Polar residues-rich tracts occupy residues 1441–1453 (CSPG…ESQT) and 1538–1561 (KAQS…ISVS). Over residues 1566–1587 (KANKRTRPVTSPRKPRTPRRTK) the composition is skewed to basic residues. Positions 1588 to 1598 (PKEQTPRRLKV) are enriched in basic and acidic residues. Positions 1602-1615 (NLQTSGHLDNSLSD) are enriched in polar residues. The interval 1844–1895 (VLTPTPDSSPRSTSSPLQSKNGSFTPRTAHILKPLMSPPSREEIVATLLDHD) is mediates interaction with MAD2L2. The span at 1846 to 1859 (TPTPDSSPRSTSSP) shows a compositional bias: low complexity. Residues 1860-1869 (LQSKNGSFTP) are compositionally biased toward polar residues. Position 1964 is a phosphoserine (serine 1964). Cysteine 3034, cysteine 3037, cysteine 3046, and cysteine 3049 together coordinate Zn(2+). A CysA-type zinc finger spans residues 3034–3049 (CPVCDDLTQHGICSKC). [4Fe-4S] cluster is bound by residues cysteine 3078, cysteine 3081, cysteine 3091, and cysteine 3096. Residues 3078–3096 (CRNCTGSFDRHIPCVSLNC) carry the CysB motif motif.

Belongs to the DNA polymerase type-B family. In terms of assembly, heterodimer with MAD2L2. This dimer forms the minimal DNA polymerase zeta complex (Pol-zeta2), with REV3L bearing DNA polymerase catalytic activity, although its activity is very low in this context. Component of the tetrameric Pol-zeta complex (Pol-zeta4), which consists of REV3L, MAD2L2, POLD2 and POLD3; Pol-zeta4 is the fully active form of DNA polymerase zeta. [4Fe-4S] cluster is required as a cofactor.

Its subcellular location is the nucleus. It carries out the reaction DNA(n) + a 2'-deoxyribonucleoside 5'-triphosphate = DNA(n+1) + diphosphate. Functionally, catalytic subunit of the DNA polymerase zeta complex, an error-prone polymerase specialized in translesion DNA synthesis (TLS). Lacks an intrinsic 3'-5' exonuclease activity and thus has no proofreading function. In Mus musculus (Mouse), this protein is DNA polymerase zeta catalytic subunit (Rev3l).